A 309-amino-acid chain; its full sequence is MKQKILVLGGPTAVGKTELSIKLAEKLNGEIISADSMQIYKNMDIGSAKVTKEEMRDINHHMIDIVSPEEEFSVADFKNIGEKAIKEIIAKEKLPMIVGGTGLYINSLTCNVTFTESEKDDEYRTYLESLAEANGNNYVHEMLKEIDEISYRDIHPNNRKRVIRALEVFKISGKPFSSYNVGDDFYKTDYDVFYYVLTMDREKLYNRINKRVDIMIENGLIDECIELKKLGYTSSMQSMQGIGYKEILYYLDKKISLDEAVNLIKQGSRNYAKRQLTWFRRDPRCTFLDKDVLSDEEILSKIIDDITNN.

10–17 (GPTAVGKT) lines the ATP pocket. Position 12–17 (12–17 (TAVGKT)) interacts with substrate. Residues 35–38 (DSMQ) form an interaction with substrate tRNA region.

It belongs to the IPP transferase family. In terms of assembly, monomer. Mg(2+) is required as a cofactor.

It carries out the reaction adenosine(37) in tRNA + dimethylallyl diphosphate = N(6)-dimethylallyladenosine(37) in tRNA + diphosphate. Catalyzes the transfer of a dimethylallyl group onto the adenine at position 37 in tRNAs that read codons beginning with uridine, leading to the formation of N6-(dimethylallyl)adenosine (i(6)A). The chain is tRNA dimethylallyltransferase from Clostridium botulinum (strain Alaska E43 / Type E3).